Here is a 79-residue protein sequence, read N- to C-terminus: Putative defensin-like protein 29 (79 aa).

Positions 1–26 (MASSGKCVFLVFLCMVALLAPSEVHA) are cleaved as a signal peptide. 3 disulfides stabilise this stretch: Cys45–Cys65, Cys51–Cys74, and Cys55–Cys76.

It belongs to the DEFL family.

Its subcellular location is the secreted. In Arabidopsis thaliana (Mouse-ear cress), this protein is Putative defensin-like protein 29.